Reading from the N-terminus, the 217-residue chain is Phosphoribosylformylglycinamidine synthase subunit PurQ (217 aa).

A Glutamine amidotransferase type-1 domain is found at Ser2–Ser217. The Nucleophile role is filled by Cys86. Active-site residues include His194 and Glu196.

Part of the FGAM synthase complex composed of 1 PurL, 1 PurQ and 2 PurS subunits.

The protein localises to the cytoplasm. The catalysed reaction is N(2)-formyl-N(1)-(5-phospho-beta-D-ribosyl)glycinamide + L-glutamine + ATP + H2O = 2-formamido-N(1)-(5-O-phospho-beta-D-ribosyl)acetamidine + L-glutamate + ADP + phosphate + H(+). The enzyme catalyses L-glutamine + H2O = L-glutamate + NH4(+). Its pathway is purine metabolism; IMP biosynthesis via de novo pathway; 5-amino-1-(5-phospho-D-ribosyl)imidazole from N(2)-formyl-N(1)-(5-phospho-D-ribosyl)glycinamide: step 1/2. Part of the phosphoribosylformylglycinamidine synthase complex involved in the purines biosynthetic pathway. Catalyzes the ATP-dependent conversion of formylglycinamide ribonucleotide (FGAR) and glutamine to yield formylglycinamidine ribonucleotide (FGAM) and glutamate. The FGAM synthase complex is composed of three subunits. PurQ produces an ammonia molecule by converting glutamine to glutamate. PurL transfers the ammonia molecule to FGAR to form FGAM in an ATP-dependent manner. PurS interacts with PurQ and PurL and is thought to assist in the transfer of the ammonia molecule from PurQ to PurL. The sequence is that of Phosphoribosylformylglycinamidine synthase subunit PurQ from Parasynechococcus marenigrum (strain WH8102).